Consider the following 552-residue polypeptide: CTP synthase (552 aa).

The segment at 1-270 is amidoligase domain; the sequence is MTKYVFVTGG…DRIICEELKL (270 aa). A CTP-binding site is contributed by S13. S13 provides a ligand contact to UTP. Residues 14-19 and D71 each bind ATP; that span reads SLGKGI. 2 residues coordinate Mg(2+): D71 and E144. Residues 151–153, 191–196, and K227 each bind CTP; these read DIE and KTKPTQ. UTP is bound by residues 191-196 and K227; that span reads KTKPTQ. A Glutamine amidotransferase type-1 domain is found at 295–547; that stretch reads TIGMVGKYVD…VEAALANKQA (253 aa). G356 contributes to the L-glutamine binding site. C383 serves as the catalytic Nucleophile; for glutamine hydrolysis. L-glutamine is bound by residues 384 to 387, E407, and R473; that span reads LGMQ. Active-site residues include H520 and E522.

Belongs to the CTP synthase family. Homotetramer.

It carries out the reaction UTP + L-glutamine + ATP + H2O = CTP + L-glutamate + ADP + phosphate + 2 H(+). The enzyme catalyses L-glutamine + H2O = L-glutamate + NH4(+). It catalyses the reaction UTP + NH4(+) + ATP = CTP + ADP + phosphate + 2 H(+). The protein operates within pyrimidine metabolism; CTP biosynthesis via de novo pathway; CTP from UDP: step 2/2. With respect to regulation, allosterically activated by GTP, when glutamine is the substrate; GTP has no effect on the reaction when ammonia is the substrate. The allosteric effector GTP functions by stabilizing the protein conformation that binds the tetrahedral intermediate(s) formed during glutamine hydrolysis. Inhibited by the product CTP, via allosteric rather than competitive inhibition. Functionally, catalyzes the ATP-dependent amination of UTP to CTP with either L-glutamine or ammonia as the source of nitrogen. Regulates intracellular CTP levels through interactions with the four ribonucleotide triphosphates. The chain is CTP synthase from Burkholderia ambifaria (strain MC40-6).